Consider the following 879-residue polypeptide: Alanine--tRNA ligase (879 aa).

The Zn(2+) site is built by histidine 566, histidine 570, cysteine 668, and histidine 672.

This sequence belongs to the class-II aminoacyl-tRNA synthetase family. Requires Zn(2+) as cofactor.

The protein localises to the cytoplasm. The enzyme catalyses tRNA(Ala) + L-alanine + ATP = L-alanyl-tRNA(Ala) + AMP + diphosphate. In terms of biological role, catalyzes the attachment of alanine to tRNA(Ala) in a two-step reaction: alanine is first activated by ATP to form Ala-AMP and then transferred to the acceptor end of tRNA(Ala). Also edits incorrectly charged Ser-tRNA(Ala) and Gly-tRNA(Ala) via its editing domain. This Listeria welshimeri serovar 6b (strain ATCC 35897 / DSM 20650 / CCUG 15529 / CIP 8149 / NCTC 11857 / SLCC 5334 / V8) protein is Alanine--tRNA ligase.